Consider the following 796-residue polypeptide: Protocadherin beta-3 (796 aa).

The first 26 residues, 1–26, serve as a signal peptide directing secretion; sequence MEAGGERFLRQRQVLLLFVFLGGSLA. At 27–690 the chain is on the extracellular side; the sequence is GSESRRYSVA…AQADLLTVYL (664 aa). 5 Cadherin domains span residues 35–133, 138–242, 247–347, 352–451, and 456–561; these read VAEE…SPVF, MHLK…APEF, YEVA…PPEL, VNSP…APAF, and YTLF…SPFV. N-linked (GlcNAc...) asparagine glycosylation is present at asparagine 169. N-linked (GlcNAc...) asparagine glycosylation is found at asparagine 418 and asparagine 436. N-linked (GlcNAc...) asparagine glycosylation is present at asparagine 567. A Cadherin 6 domain is found at 568–671; sequence GSAPCTELVP…LVDGFSQPYL (104 aa). Residues 691–711 traverse the membrane as a helical segment; it reads VVALASVSSLFLFSVLLFVAV. Residues 712–796 are Cytoplasmic-facing; the sequence is RLCRRSRAAS…PSFRKSFEFS (85 aa).

The protein localises to the cell membrane. In terms of biological role, potential calcium-dependent cell-adhesion protein. May be involved in the establishment and maintenance of specific neuronal connections in the brain. This Pan troglodytes (Chimpanzee) protein is Protocadherin beta-3 (PCDHB3).